Here is a 179-residue protein sequence, read N- to C-terminus: ATP synthase subunit delta (179 aa).

This sequence belongs to the ATPase delta chain family. As to quaternary structure, F-type ATPases have 2 components, F(1) - the catalytic core - and F(0) - the membrane proton channel. F(1) has five subunits: alpha(3), beta(3), gamma(1), delta(1), epsilon(1). F(0) has three main subunits: a(1), b(2) and c(10-14). The alpha and beta chains form an alternating ring which encloses part of the gamma chain. F(1) is attached to F(0) by a central stalk formed by the gamma and epsilon chains, while a peripheral stalk is formed by the delta and b chains.

It is found in the cell inner membrane. In terms of biological role, f(1)F(0) ATP synthase produces ATP from ADP in the presence of a proton or sodium gradient. F-type ATPases consist of two structural domains, F(1) containing the extramembraneous catalytic core and F(0) containing the membrane proton channel, linked together by a central stalk and a peripheral stalk. During catalysis, ATP synthesis in the catalytic domain of F(1) is coupled via a rotary mechanism of the central stalk subunits to proton translocation. This protein is part of the stalk that links CF(0) to CF(1). It either transmits conformational changes from CF(0) to CF(1) or is implicated in proton conduction. The polypeptide is ATP synthase subunit delta (Acidobacterium capsulatum (strain ATCC 51196 / DSM 11244 / BCRC 80197 / JCM 7670 / NBRC 15755 / NCIMB 13165 / 161)).